Consider the following 215-residue polypeptide: MLKKHDLLNLDWTKTNGMIPVIIQDYSSSEVLMHGYMNQDALTKTQEDGLVTFYSRTKNCLWTKGEISGNYLKVIEISTDCDNDTLLILVAAQGKTCHLGNSSCFISNKYNINFLFKLEEIIEERKNKFSDNSYTSSLYKSGTSRIAQKVGEEAIETILAAMNKDQIELINEASDLIYHLVVLLHDQDLNFNLVIDNLKKRREKNLNTNSEKLLK.

The phosphoribosyl-AMP cyclohydrolase stretch occupies residues 1–114 (MLKKHDLLNL…FISNKYNINF (114 aa)). The segment at 115–215 (LFKLEEIIEE…LNTNSEKLLK (101 aa)) is phosphoribosyl-ATP pyrophosphohydrolase.

The protein in the N-terminal section; belongs to the PRA-CH family. This sequence in the C-terminal section; belongs to the PRA-PH family.

The protein localises to the cytoplasm. The catalysed reaction is 1-(5-phospho-beta-D-ribosyl)-ATP + H2O = 1-(5-phospho-beta-D-ribosyl)-5'-AMP + diphosphate + H(+). The enzyme catalyses 1-(5-phospho-beta-D-ribosyl)-5'-AMP + H2O = 1-(5-phospho-beta-D-ribosyl)-5-[(5-phospho-beta-D-ribosylamino)methylideneamino]imidazole-4-carboxamide. It functions in the pathway amino-acid biosynthesis; L-histidine biosynthesis; L-histidine from 5-phospho-alpha-D-ribose 1-diphosphate: step 2/9. Its pathway is amino-acid biosynthesis; L-histidine biosynthesis; L-histidine from 5-phospho-alpha-D-ribose 1-diphosphate: step 3/9. This chain is Histidine biosynthesis bifunctional protein HisIE (hisI), found in Buchnera aphidicola subsp. Acyrthosiphon pisum (strain APS) (Acyrthosiphon pisum symbiotic bacterium).